Reading from the N-terminus, the 246-residue chain is tRNA (guanine-N(1)-)-methyltransferase (246 aa).

S-adenosyl-L-methionine contacts are provided by residues G113 and I133 to L138.

The protein belongs to the RNA methyltransferase TrmD family. As to quaternary structure, homodimer.

The protein localises to the cytoplasm. The catalysed reaction is guanosine(37) in tRNA + S-adenosyl-L-methionine = N(1)-methylguanosine(37) in tRNA + S-adenosyl-L-homocysteine + H(+). Specifically methylates guanosine-37 in various tRNAs. This chain is tRNA (guanine-N(1)-)-methyltransferase, found in Haemophilus influenzae (strain PittEE).